The chain runs to 296 residues: Protein RarD (296 aa).

Topologically, residues 1 to 11 (MDAKQTRQGVL) are cytoplasmic. Residues 12–34 (LALAAYFIWGIAPAYFKLIYYVP) form a helical membrane-spanning segment. The region spanning 18 to 145 (FIWGIAPAYF…AICGVLVQLW (128 aa)) is the EamA domain. The Periplasmic portion of the chain corresponds to 35–37 (ADE). The helical transmembrane segment at 38-60 (ILTHRVIWSFFFMVVLMSICRQW) threads the bilayer. Over 61-72 (SYLKTLIQTPQK) the chain is Cytoplasmic. The helical transmembrane segment at 73-95 (IFMLAVSAVLIGGNWLLFIWAVN) threads the bilayer. At 96 to 99 (NHHM) the chain is on the periplasmic side. A helical membrane pass occupies residues 100–122 (LEASLGYFINPLVNIVLGMIFLG). At 123–128 (ERFRRM) the chain is on the cytoplasmic side. The helical transmembrane segment at 129 to 146 (QWLAVILAICGVLVQLWT) threads the bilayer. The Periplasmic segment spans residues 147–149 (FGS). A helical transmembrane segment spans residues 150 to 167 (LPIIALGLAFSFAFYGLV). Topologically, residues 168-179 (RKKIAVEAQTGM) are cytoplasmic. Residues 180-197 (LIETMWLLPVAAIYLFAI) form a helical membrane-spanning segment. Over 198-211 (ADSSTSHMGQNPMS) the chain is Periplasmic. A helical membrane pass occupies residues 212–234 (LNLLLIAAGIVTTVPLLCFTAAA). Over 235–238 (TRLR) the chain is Cytoplasmic. A helical membrane pass occupies residues 239–261 (LSTLGFFQYIGPTLMFLLAVTFY). Topologically, residues 262–270 (GEKPGADKM) are periplasmic. Residues 271-290 (VTFAFIWVALAIFVMDAIYT) form a helical membrane-spanning segment. At 291–296 (QRRTSK) the chain is on the cytoplasmic side.

The protein belongs to the EamA transporter family.

It localises to the cell inner membrane. The polypeptide is Protein RarD (rarD) (Escherichia coli (strain K12)).